We begin with the raw amino-acid sequence, 276 residues long: Melibiose/raffinose/stachyose import permease protein MelC (276 aa).

Helical transmembrane passes span 11-31 (IITL…YILL), 74-94 (IITG…AYPL), 104-124 (AVFA…MVPL), 139-159 (IAIF…YSGF), 186-206 (IVFP…CVFI), and 240-260 (LHLV…LFLA). Residues 69 to 261 (FINTMIITGF…LPMVVLFLAL (193 aa)) enclose the ABC transmembrane type-1 domain.

This sequence belongs to the binding-protein-dependent transport system permease family. In terms of assembly, the complex is composed of two ATP-binding proteins (MsmX), two transmembrane proteins (MelC and MelD) and a solute-binding protein (MelE).

It is found in the cell membrane. Its function is as follows. Part of the ABC transporter complex MelEDC-MsmX involved in melibiose, raffinose and stachyose import. Probably responsible for the translocation of the substrate across the membrane. The protein is Melibiose/raffinose/stachyose import permease protein MelC of Bacillus subtilis (strain 168).